A 147-amino-acid polypeptide reads, in one-letter code: Lysozyme C (147 aa).

A signal peptide spans 1-18; it reads MKVLLLLGFIFCSMAAHG. Residues 19 to 147 form the C-type lysozyme domain; sequence KRMERCEFAR…LSKYLEGCHL (129 aa). Intrachain disulfides connect Cys24-Cys145, Cys48-Cys133, Cys83-Cys99, and Cys95-Cys113. Active-site residues include Glu53 and Asp71.

The protein belongs to the glycosyl hydrolase 22 family. Monomer.

The protein resides in the secreted. The catalysed reaction is Hydrolysis of (1-&gt;4)-beta-linkages between N-acetylmuramic acid and N-acetyl-D-glucosamine residues in a peptidoglycan and between N-acetyl-D-glucosamine residues in chitodextrins.. Functionally, lysozymes have primarily a bacteriolytic function; those in tissues and body fluids are associated with the monocyte-macrophage system and enhance the activity of immunoagents. The sequence is that of Lysozyme C (LYZ) from Trichosurus vulpecula (Brush-tailed possum).